The sequence spans 79 residues: Large ribosomal subunit protein uL22 (79 aa).

It belongs to the universal ribosomal protein uL22 family. Part of the 50S ribosomal subunit.

Functionally, this protein binds specifically to 23S rRNA; its binding is stimulated by other ribosomal proteins, e.g. L4, L17, and L20. It is important during the early stages of 50S assembly. It makes multiple contacts with different domains of the 23S rRNA in the assembled 50S subunit and ribosome. Its function is as follows. The globular domain of the protein is located near the polypeptide exit tunnel on the outside of the subunit, while an extended beta-hairpin is found that lines the wall of the exit tunnel in the center of the 70S ribosome. This Prunus armeniaca phytoplasma protein is Large ribosomal subunit protein uL22 (rplV).